A 211-amino-acid polypeptide reads, in one-letter code: Probable molybdenum cofactor guanylyltransferase (211 aa).

GTP contacts are provided by residues 21–23, lysine 33, aspartate 84, and aspartate 116; that span reads LAG. Aspartate 116 is a Mg(2+) binding site.

This sequence belongs to the MobA family. Mg(2+) is required as a cofactor.

The protein resides in the cytoplasm. It catalyses the reaction Mo-molybdopterin + GTP + H(+) = Mo-molybdopterin guanine dinucleotide + diphosphate. In terms of biological role, transfers a GMP moiety from GTP to Mo-molybdopterin (Mo-MPT) cofactor (Moco or molybdenum cofactor) to form Mo-molybdopterin guanine dinucleotide (Mo-MGD) cofactor. This is Probable molybdenum cofactor guanylyltransferase from Rhodopirellula baltica (strain DSM 10527 / NCIMB 13988 / SH1).